The following is a 486-amino-acid chain: MNTQQLAKLRSIVPEMHRVRHIHFVGIGGAGMGGIAEVLANEGYEISGSDLAPNAVTQQLTKLGAQIYFHHRAENVLNASVVVVSSAITADNPEIVAAHDARIPVIRRAEMLAELMRFRHGIAIAGTHGKTTTTAMVTSIYAEAGLDPTFVNGGLVKAAGTHARLGSSRYLIAEADESDASFLHLQPMVAIVTNIEADHMDTYQGDFENLKQTFINFLHNLPFYGQAVMCIDDAVIRELLPRVGRHITTYGFSDDADVRVAGYRQTGAQGHFTLERKDKTLLNVTLNAPGRHNALNAAAAVAVATDEGIDDEAILRALERFQGTSRRFDFLGEYPLELVNGQSGTAMLVDDYGHHPTEVDATIKAARAGWPDKRLVMIFQPHRYTRTRDLYDDFAHVLSQVDVLLMLDVYSAGESPIPGADSRSLCRTIRGRGKIDPILVTDMDTLPELLSQALRGEDLILVQGAGNIGKLARKLADSRLQPQISE.

126–132 contacts ATP; it reads GTHGKTT.

This sequence belongs to the MurCDEF family.

The protein resides in the cytoplasm. It catalyses the reaction UDP-N-acetyl-alpha-D-muramate + L-alanine + ATP = UDP-N-acetyl-alpha-D-muramoyl-L-alanine + ADP + phosphate + H(+). It participates in cell wall biogenesis; peptidoglycan biosynthesis. Its function is as follows. Cell wall formation. In Pectobacterium atrosepticum (strain SCRI 1043 / ATCC BAA-672) (Erwinia carotovora subsp. atroseptica), this protein is UDP-N-acetylmuramate--L-alanine ligase.